Here is a 213-residue protein sequence, read N- to C-terminus: Probable nicotinate-nucleotide adenylyltransferase (213 aa).

Belongs to the NadD family.

It catalyses the reaction nicotinate beta-D-ribonucleotide + ATP + H(+) = deamido-NAD(+) + diphosphate. Its pathway is cofactor biosynthesis; NAD(+) biosynthesis; deamido-NAD(+) from nicotinate D-ribonucleotide: step 1/1. In terms of biological role, catalyzes the reversible adenylation of nicotinate mononucleotide (NaMN) to nicotinic acid adenine dinucleotide (NaAD). In Shigella boydii serotype 4 (strain Sb227), this protein is Probable nicotinate-nucleotide adenylyltransferase.